Here is a 98-residue protein sequence, read N- to C-terminus: Integration host factor subunit beta (98 aa).

It belongs to the bacterial histone-like protein family. In terms of assembly, heterodimer of an alpha and a beta chain.

Its function is as follows. This protein is one of the two subunits of integration host factor, a specific DNA-binding protein that functions in genetic recombination as well as in transcriptional and translational control. The chain is Integration host factor subunit beta from Gluconacetobacter diazotrophicus (strain ATCC 49037 / DSM 5601 / CCUG 37298 / CIP 103539 / LMG 7603 / PAl5).